A 457-amino-acid polypeptide reads, in one-letter code: Pancreatic triacylglycerol lipase (457 aa).

Positions 1–7 (LLLGAVA) are cleaved as a signal peptide. Disulfide bonds link cysteine 12/cysteine 18 and cysteine 99/cysteine 110. Serine 161 (nucleophile) is an active-site residue. Aspartate 185 (charge relay system) is an active-site residue. Residues glutamate 196, arginine 199, aspartate 201, and aspartate 204 each contribute to the Ca(2+) site. The cysteines at positions 246 and 270 are disulfide-linked. Histidine 272 acts as the Charge relay system in catalysis. 2 disulfides stabilise this stretch: cysteine 294-cysteine 305 and cysteine 308-cysteine 313. Asparagine 343 carries an N-linked (GlcNAc...) asparagine glycan. Residues 347-457 (WRYQIAVTLS…EDILLTLTPC (111 aa)) enclose the PLAT domain. Cysteines 441 and 457 form a disulfide.

Belongs to the AB hydrolase superfamily. Lipase family. As to quaternary structure, forms a 1:1 stoichiometric complex with (pro)colipase/CLPS.

It is found in the secreted. The enzyme catalyses a triacylglycerol + H2O = a diacylglycerol + a fatty acid + H(+). It carries out the reaction 1,2,3-tributanoylglycerol + H2O = dibutanoylglycerol + butanoate + H(+). It catalyses the reaction 1,2,3-tri-(9Z-octadecenoyl)-glycerol + H2O = di-(9Z)-octadecenoylglycerol + (9Z)-octadecenoate + H(+). The catalysed reaction is all-trans-retinyl hexadecanoate + H2O = all-trans-retinol + hexadecanoate + H(+). The enzyme catalyses 1,2-di-(9Z-octadecenoyl)-glycerol + H2O = (9Z-octadecenoyl)-glycerol + (9Z)-octadecenoate + H(+). Its activity is regulated as follows. Inhibited by bile salts, is reactivated by (pro)colipase/CLPS. Its function is as follows. Plays an important role in fat metabolism. It preferentially splits the esters of long-chain fatty acids at positions 1 and 3, producing mainly 2-monoacylglycerol and free fatty acids, and shows considerably higher activity against insoluble emulsified substrates than against soluble ones. The chain is Pancreatic triacylglycerol lipase (PNLIP) from Myocastor coypus (Coypu).